A 105-amino-acid chain; its full sequence is Flagellar transcriptional regulator FlhD (105 aa).

This sequence belongs to the FlhD family. In terms of assembly, homodimer; disulfide-linked. Forms a heterohexamer composed of two FlhC and four FlhD subunits. Each FlhC binds a FlhD dimer, forming a heterotrimer, and a hexamer assembles by dimerization of two heterotrimers.

It localises to the cytoplasm. Functions in complex with FlhC as a master transcriptional regulator that regulates transcription of several flagellar and non-flagellar operons by binding to their promoter region. Activates expression of class 2 flagellar genes, including fliA, which is a flagellum-specific sigma factor that turns on the class 3 genes. Also regulates genes whose products function in a variety of physiological pathways. This is Flagellar transcriptional regulator FlhD from Ralstonia pickettii (strain 12J).